An 881-amino-acid chain; its full sequence is Phosphoenolpyruvate carboxylase (881 aa).

Residues H142 and K547 contribute to the active site.

This sequence belongs to the PEPCase type 1 family. Mg(2+) is required as a cofactor.

It catalyses the reaction oxaloacetate + phosphate = phosphoenolpyruvate + hydrogencarbonate. In terms of biological role, forms oxaloacetate, a four-carbon dicarboxylic acid source for the tricarboxylic acid cycle. This is Phosphoenolpyruvate carboxylase from Hahella chejuensis (strain KCTC 2396).